Reading from the N-terminus, the 445-residue chain is Trigger factor (445 aa).

A PPIase FKBP-type domain is found at 162-247; sequence GDQITMDAVG…VKAVHTAEPT (86 aa).

Belongs to the FKBP-type PPIase family. Tig subfamily.

Its subcellular location is the cytoplasm. It catalyses the reaction [protein]-peptidylproline (omega=180) = [protein]-peptidylproline (omega=0). Involved in protein export. Acts as a chaperone by maintaining the newly synthesized protein in an open conformation. Functions as a peptidyl-prolyl cis-trans isomerase. In Rickettsia bellii (strain OSU 85-389), this protein is Trigger factor.